A 323-amino-acid polypeptide reads, in one-letter code: Cytochrome c biogenesis protein CcsA (323 aa).

Transmembrane regions (helical) follow at residues 9-29, 37-57, 71-91, 100-120, 145-165, 227-247, 261-275, and 288-308; these read ILTH…LITL, LYVS…GLLV, LYES…FTYF, VSAI…SGFL, MVLG…LIVI, IISL…VWAN, TWAF…IYLH, and AIVA…VNLL.

The protein belongs to the CcmF/CycK/Ccl1/NrfE/CcsA family. May interact with Ccs1.

The protein resides in the plastid. Its subcellular location is the chloroplast thylakoid membrane. Functionally, required during biogenesis of c-type cytochromes (cytochrome c6 and cytochrome f) at the step of heme attachment. The protein is Cytochrome c biogenesis protein CcsA of Cucumis sativus (Cucumber).